A 93-amino-acid polypeptide reads, in one-letter code: Putative protein adenylyltransferase MJ0435 (93 aa).

The GSX(10)DXD motif signature appears at 26–40 (GSYARNEQKETSDID). The Mg(2+) site is built by aspartate 38, aspartate 40, and aspartate 70.

Belongs to the MntA antitoxin family. Probably forms a complex with cognate toxin MJ0434. Mg(2+) is required as a cofactor.

The catalysed reaction is L-tyrosyl-[protein] + ATP = O-(5'-adenylyl)-L-tyrosyl-[protein] + diphosphate. The enzyme catalyses O-(5'-adenylyl)-L-tyrosyl-[protein] + ATP = O-[5'-(adenylyl-(5'-&gt;3')-adenylyl)]-L-tyrosyl-[protein] + diphosphate. Its function is as follows. Probable antitoxin component of a putative type VII toxin-antitoxin (TA) system. Neutralizes cognate toxic MJ0434 by di-AMPylation. The protein is Putative protein adenylyltransferase MJ0435 of Methanocaldococcus jannaschii (strain ATCC 43067 / DSM 2661 / JAL-1 / JCM 10045 / NBRC 100440) (Methanococcus jannaschii).